We begin with the raw amino-acid sequence, 199 residues long: MLIVGPPGAGKGTQASRITSGYGIPDISTGDIFRANIKNKTELGQQVKAIVDAGDYVPDSLTNELVTGRLAEDDAKGGFLLDGYPRTLEQVKYLDELLGSDGEKLDAVIQLVADREEIVARLTKRAREQGRADDSEEAIRYRQEVYVRETSPLIEVYRERGLLVEVDGLGPVDEVAGRICTALAERGILPLTGTGESVA.

Position 8-13 (8-13 (GAGKGT)) interacts with ATP. An NMP region spans residues 28 to 57 (STGDIFRANIKNKTELGQQVKAIVDAGDYV). Residues Thr-29, Arg-34, 55-57 (DYV), 83-86 (GYPR), and Gln-90 contribute to the AMP site. The tract at residues 124–134 (KRAREQGRADD) is LID. Residue Arg-125 participates in ATP binding. Arg-131 and Arg-142 together coordinate AMP. Gly-170 is an ATP binding site.

It belongs to the adenylate kinase family. As to quaternary structure, monomer.

The protein localises to the cytoplasm. The catalysed reaction is AMP + ATP = 2 ADP. Its pathway is purine metabolism; AMP biosynthesis via salvage pathway; AMP from ADP: step 1/1. Catalyzes the reversible transfer of the terminal phosphate group between ATP and AMP. Plays an important role in cellular energy homeostasis and in adenine nucleotide metabolism. This chain is Adenylate kinase, found in Leifsonia xyli subsp. xyli (strain CTCB07).